The chain runs to 292 residues: Protein/nucleic acid deglycase HchA (292 aa).

A compositionally biased stretch (polar residues) spans 1 to 12; that stretch reads MSQDVNKLSKQP. The tract at residues 1–23 is disordered; sequence MSQDVNKLSKQPTPDKAEDNAFF. Residue cysteine 190 is the Nucleophile of the active site.

It belongs to the peptidase C56 family. HchA subfamily.

It localises to the cytoplasm. It carries out the reaction N(omega)-(1-hydroxy-2-oxopropyl)-L-arginyl-[protein] + H2O = lactate + L-arginyl-[protein] + H(+). It catalyses the reaction N(6)-(1-hydroxy-2-oxopropyl)-L-lysyl-[protein] + H2O = lactate + L-lysyl-[protein] + H(+). The catalysed reaction is S-(1-hydroxy-2-oxopropyl)-L-cysteinyl-[protein] + H2O = lactate + L-cysteinyl-[protein] + H(+). The enzyme catalyses N(omega)-(1-hydroxy-2-oxoethyl)-L-arginyl-[protein] + H2O = L-arginyl-[protein] + glycolate + H(+). It carries out the reaction N(6)-(1-hydroxy-2-oxoethyl)-L-lysyl-[protein] + H2O = glycolate + L-lysyl-[protein] + H(+). It catalyses the reaction S-(1-hydroxy-2-oxoethyl)-L-cysteinyl-[protein] + H2O = glycolate + L-cysteinyl-[protein] + H(+). The catalysed reaction is N(2)-(1-hydroxy-2-oxopropyl)-dGTP + H2O = lactate + dGTP + H(+). The enzyme catalyses N(2)-(1-hydroxy-2-oxopropyl)-GTP + H2O = lactate + GTP + H(+). It carries out the reaction N(2)-(1-hydroxy-2-oxopropyl)-GDP + H2O = lactate + GDP + H(+). It catalyses the reaction N(2)-(1-hydroxy-2-oxopropyl)-GMP + H2O = lactate + GMP + H(+). The catalysed reaction is N(2)-(1-hydroxy-2-oxoethyl)-dGTP + H2O = dGTP + glycolate + H(+). The enzyme catalyses N(2)-(1-hydroxy-2-oxoethyl)-GTP + H2O = glycolate + GTP + H(+). It carries out the reaction N(2)-(1-hydroxy-2-oxoethyl)-GDP + H2O = glycolate + GDP + H(+). It catalyses the reaction N(2)-(1-hydroxy-2-oxoethyl)-GMP + H2O = glycolate + GMP + H(+). The catalysed reaction is an N(2)-(1-hydroxy-2-oxopropyl)-guanosine in RNA + H2O = a guanosine in RNA + lactate + H(+). The enzyme catalyses an N(2)-(1-hydroxy-2-oxopropyl)-2'-deoxyguanosine in DNA + H2O = a 2'-deoxyguanosine in DNA + lactate + H(+). It carries out the reaction an N(2)-(1-hydroxy-2-oxoethyl)-guanosine in RNA + H2O = a guanosine in RNA + glycolate + H(+). It catalyses the reaction an N(2)-(1-hydroxy-2-oxoethyl)-2'-deoxyguanosine in DNA + H2O = a 2'-deoxyguanosine in DNA + glycolate + H(+). Functionally, protein and nucleotide deglycase that catalyzes the deglycation of the Maillard adducts formed between amino groups of proteins or nucleotides and reactive carbonyl groups of glyoxals. Thus, functions as a protein deglycase that repairs methylglyoxal- and glyoxal-glycated proteins, and releases repaired proteins and lactate or glycolate, respectively. Deglycates cysteine, arginine and lysine residues in proteins, and thus reactivates these proteins by reversing glycation by glyoxals. Acts on early glycation intermediates (hemithioacetals and aminocarbinols), preventing the formation of Schiff bases and advanced glycation endproducts (AGE). Also functions as a nucleotide deglycase able to repair glycated guanine in the free nucleotide pool (GTP, GDP, GMP, dGTP) and in DNA and RNA. Is thus involved in a major nucleotide repair system named guanine glycation repair (GG repair), dedicated to reversing methylglyoxal and glyoxal damage via nucleotide sanitization and direct nucleic acid repair. Plays an important role in protecting cells from carbonyl stress. This is Protein/nucleic acid deglycase HchA from Staphylococcus aureus (strain MRSA252).